We begin with the raw amino-acid sequence, 481 residues long: MTVETFHPKQTTTLETPAKTLEAASADSVNTGNVATGNRIGFVSLGCPKNLVDSERILTQLRIDGYEVTNSYDNADLVIVNTCGFIDAAVEESLDAVREALEENGKVIVTGCLGAKENQIREVHPDVLEITGPHSYEAVLKHVHKYVPKPEHNPFTSLIPQTGVKLTPKHYAYLKISEGCDNRCTFCIIPALRGDLDSRGAGSVLDEAKRLVEAGVQEILVVSQDTSAYGKDKGGRTDFWNGMPVKQDITSLARQLGKMGAWVRLHYIYPYPWVDDLIPLMAEGLILPYLDIPMQHASPRILKMMKRPGRVDRQLEAIQRWREICPDLVIRSTFIVGFPGETEEDFEMLLDFLREARLDRVGCFKYSEVEGAVANTIAELISEEVKEDRYHRFMEVQAEISAERLARFVGRTMDILIDDVDEEGAIGRSFADAPEIDGMVFINGETELEPGMLVRAVITHSDEHDLWAELVDADAEDEVEA.

In terms of domain architecture, MTTase N-terminal spans 38–148; the sequence is NRIGFVSLGC…VLKHVHKYVP (111 aa). Positions 47, 83, 112, 180, 184, and 187 each coordinate [4Fe-4S] cluster. In terms of domain architecture, Radical SAM core spans 166-403; sequence LTPKHYAYLK…MEVQAEISAE (238 aa). The region spanning 406–472 is the TRAM domain; sequence ARFVGRTMDI…EHDLWAELVD (67 aa).

The protein belongs to the methylthiotransferase family. RimO subfamily. [4Fe-4S] cluster is required as a cofactor.

The protein resides in the cytoplasm. The catalysed reaction is L-aspartate(89)-[ribosomal protein uS12]-hydrogen + (sulfur carrier)-SH + AH2 + 2 S-adenosyl-L-methionine = 3-methylsulfanyl-L-aspartate(89)-[ribosomal protein uS12]-hydrogen + (sulfur carrier)-H + 5'-deoxyadenosine + L-methionine + A + S-adenosyl-L-homocysteine + 2 H(+). In terms of biological role, catalyzes the methylthiolation of an aspartic acid residue of ribosomal protein uS12. This chain is Ribosomal protein uS12 methylthiotransferase RimO, found in Shewanella oneidensis (strain ATCC 700550 / JCM 31522 / CIP 106686 / LMG 19005 / NCIMB 14063 / MR-1).